A 419-amino-acid chain; its full sequence is UDP-N-acetylglucosamine 1-carboxyvinyltransferase (419 aa).

Residue 22–23 (KN) coordinates phosphoenolpyruvate. UDP-N-acetyl-alpha-D-glucosamine is bound at residue arginine 91. Catalysis depends on cysteine 115, which acts as the Proton donor. Cysteine 115 is modified (2-(S-cysteinyl)pyruvic acid O-phosphothioketal). UDP-N-acetyl-alpha-D-glucosamine is bound by residues 120-124 (RPVDL), 160-163 (KVSV), aspartate 305, and valine 327.

Belongs to the EPSP synthase family. MurA subfamily.

It localises to the cytoplasm. The enzyme catalyses phosphoenolpyruvate + UDP-N-acetyl-alpha-D-glucosamine = UDP-N-acetyl-3-O-(1-carboxyvinyl)-alpha-D-glucosamine + phosphate. It functions in the pathway cell wall biogenesis; peptidoglycan biosynthesis. Its function is as follows. Cell wall formation. Adds enolpyruvyl to UDP-N-acetylglucosamine. The polypeptide is UDP-N-acetylglucosamine 1-carboxyvinyltransferase (Shigella sonnei (strain Ss046)).